Consider the following 310-residue polypeptide: ADP-L-glycero-D-manno-heptose-6-epimerase (310 aa).

NADP(+) is bound by residues 10 to 11 (FI), 31 to 32 (DN), lysine 38, lysine 53, 75 to 79 (EGACS), and asparagine 92. The active-site Proton acceptor is tyrosine 140. Lysine 144 contributes to the NADP(+) binding site. Asparagine 169 contacts substrate. Residues valine 170 and lysine 178 each contribute to the NADP(+) site. Lysine 178 acts as the Proton acceptor in catalysis. Substrate is bound by residues serine 180, histidine 187, 201–204 (FAGS), arginine 209, and tyrosine 272.

The protein belongs to the NAD(P)-dependent epimerase/dehydratase family. HldD subfamily. In terms of assembly, homopentamer. The cofactor is NADP(+).

It catalyses the reaction ADP-D-glycero-beta-D-manno-heptose = ADP-L-glycero-beta-D-manno-heptose. It participates in nucleotide-sugar biosynthesis; ADP-L-glycero-beta-D-manno-heptose biosynthesis; ADP-L-glycero-beta-D-manno-heptose from D-glycero-beta-D-manno-heptose 7-phosphate: step 4/4. Functionally, catalyzes the interconversion between ADP-D-glycero-beta-D-manno-heptose and ADP-L-glycero-beta-D-manno-heptose via an epimerization at carbon 6 of the heptose. In Yersinia pseudotuberculosis serotype O:1b (strain IP 31758), this protein is ADP-L-glycero-D-manno-heptose-6-epimerase.